The following is a 369-amino-acid chain: Quinolinate synthase (369 aa).

2 residues coordinate iminosuccinate: His47 and Ser64. Residue Cys111 coordinates [4Fe-4S] cluster. Residues 142-144 and Ser163 each bind iminosuccinate; that span reads YVN. Residue Cys231 coordinates [4Fe-4S] cluster. Residues 257-259 and Thr274 contribute to the iminosuccinate site; that span reads HPE. Residue Cys321 coordinates [4Fe-4S] cluster.

Belongs to the quinolinate synthase family. Type 3 subfamily. It depends on [4Fe-4S] cluster as a cofactor.

It is found in the cytoplasm. It carries out the reaction iminosuccinate + dihydroxyacetone phosphate = quinolinate + phosphate + 2 H2O + H(+). Its pathway is cofactor biosynthesis; NAD(+) biosynthesis; quinolinate from iminoaspartate: step 1/1. In terms of biological role, catalyzes the condensation of iminoaspartate with dihydroxyacetone phosphate to form quinolinate. In Bacillus pumilus (strain SAFR-032), this protein is Quinolinate synthase.